The primary structure comprises 64 residues: Large ribosomal subunit protein bL33 (64 aa).

Residues 19-40 (TSTDPKRSNGVSRYTTEKNRRN) form a disordered region.

It belongs to the bacterial ribosomal protein bL33 family.

The chain is Large ribosomal subunit protein bL33 from Prochlorococcus marinus (strain MIT 9215).